A 245-amino-acid chain; its full sequence is Alpha carbonic anhydrase 2 (245 aa).

The first 23 residues, 1–23 (MDKISIRCFIFLVLTSFVTTVSC), serve as a signal peptide directing secretion. An Alpha-carbonic anhydrase domain is found at 37-245 (HEFSYEWNQE…THRYFLLFFT (209 aa)). Cys62 and Cys222 form a disulfide bridge. N-linked (GlcNAc...) asparagine glycosylation is present at Asn95. His103 (proton acceptor) is an active-site residue. Residue Asn120 is glycosylated (N-linked (GlcNAc...) asparagine). The Zn(2+) site is built by His130, His132, and His149. Residue Asn156 is glycosylated (N-linked (GlcNAc...) asparagine). 218–219 (TT) provides a ligand contact to substrate.

It belongs to the alpha-class carbonic anhydrase family. Zn(2+) is required as a cofactor. N-glycosylated. Expressed in stems and roots.

It localises to the plastid. The protein localises to the chloroplast stroma. It catalyses the reaction hydrogencarbonate + H(+) = CO2 + H2O. Reversible hydration of carbon dioxide. This chain is Alpha carbonic anhydrase 2 (ACA2), found in Arabidopsis thaliana (Mouse-ear cress).